The chain runs to 558 residues: Polysialic acid transport protein KpsD (558 aa).

Residues 1-20 (MKLFKSILLIAACHAAQASA) form the signal peptide.

This sequence to E.coli K1 KpsD.

The protein resides in the periplasm. Its function is as follows. Involved in the translocation of the polysialic acid capsule across the outer membrane to the cell surface. May function as the periplasmic binding element of the PSA transport system, in which it transiently interacts with the membrane component of the transporter, binds polysaccharide and transports the polymer to a component in the outer membrane. The protein is Polysialic acid transport protein KpsD (kpsD) of Escherichia coli.